Here is a 306-residue protein sequence, read N- to C-terminus: tRNA dimethylallyltransferase (306 aa).

9–16 (GPTGIGKT) serves as a coordination point for ATP. Substrate is bound at residue 11-16 (TGIGKT). Residues 34 to 37 (DSMQ) are interaction with substrate tRNA.

Belongs to the IPP transferase family. In terms of assembly, monomer. Mg(2+) is required as a cofactor.

The catalysed reaction is adenosine(37) in tRNA + dimethylallyl diphosphate = N(6)-dimethylallyladenosine(37) in tRNA + diphosphate. In terms of biological role, catalyzes the transfer of a dimethylallyl group onto the adenine at position 37 in tRNAs that read codons beginning with uridine, leading to the formation of N6-(dimethylallyl)adenosine (i(6)A). The protein is tRNA dimethylallyltransferase of Lactobacillus johnsonii (strain CNCM I-12250 / La1 / NCC 533).